A 301-amino-acid polypeptide reads, in one-letter code: Phomoidride biosynthesis cluster protein F (301 aa).

Functionally, part of the gene cluster that mediates the biosynthesis of the antihypercholesterolemic agents phomoidrides which are dimeric anhydrides. The function of phiF within the pathway has still to be determined. The pathway begins with the highly reducing polyketide synthase phiA that catalyzes the formation of a C12-fatty acyl-ACP, starting from one acetate and 5 malonate units. The hydrolase phiM is involved in the release of the C12-fatty acyl chain from phiA. The alkylcitrate synthase (ACS) phiJ and the alkylcitrate dehydratase (ACDH) phiI then give rise to decarboxylated monomeric anhydrides by coupling the C12-fatty acyl chain with oxalacetic acid. The cyclase phiC is responsible for the dimerization of the monomeric anhydrides which leads to the production of prephomoidride that contains the characteristic bicyclo[4.3.1]deca-1,6-diene system of phomoidrides. Iterative oxidation catalyzed by the alpha-ketoglutarate-dependent dioxygenase phiK produced then phomoidride A. Finally, the methyltransferase phiE converts phomoidride A to phomoidride B via an acetalization reaction. The phosphatidylethanolamine-binding protein phiB and phiN are not essential for dimerization and their functions have still to be determined. This chain is Phomoidride biosynthesis cluster protein F, found in Fungal sp. (strain ATCC 74256).